A 500-amino-acid chain; its full sequence is Protein shisa-6 (500 aa).

Positions 1–25 (MALRRLLLLLLLSLESLDLLPSVHG) are cleaved as a signal peptide. Residues 26 to 174 (ARGRAANRTL…NKYDPEKDKT (149 aa)) are Extracellular-facing. 2 N-linked (GlcNAc...) asparagine glycosylation sites follow: N32 and N59. The interval 52–73 (ARGGRELNGTARAPGIPEAGSR) is disordered. Residues 175 to 195 (NFTVYITCGVIAFVIVAGVFA) traverse the membrane as a helical segment. At 196 to 500 (KVSYDKAHRP…YTASKTEVTV (305 aa)) the chain is on the cytoplasmic side. Positions 240–255 (TSPKENTPVRSSSKNH) are enriched in polar residues. 2 disordered regions span residues 240-269 (TSPK…PEKP) and 349-378 (SQQK…DRGL). S391, S397, and S409 each carry phosphoserine. A Phosphothreonine modification is found at T433. The disordered stretch occupies residues 444–470 (MHSHPSASNNSYATLGQSQTAAKRHAF). The segment covering 448 to 464 (PSASNNSYATLGQSQTA) has biased composition (polar residues). Position 477 is a phosphothreonine (T477). The PDZ-binding motif lies at 497-500 (EVTV).

Belongs to the shisa family. As to quaternary structure, component of the postsynaptic hippocampal AMPA-type glutamate receptor (AMPAR) complex, at least composed of pore forming AMPAR subunits GRIA1, GRIA2 and GRIA3 and AMPAR auxiliary proteins SHISA6 and SHISA7. Interacts (via PDZ-binding motif) with DLG4/PSD-95 (via PDZ domain); the interaction is direct. Expressed in the developing ventral mesencephalon.

The protein localises to the membrane. Its subcellular location is the postsynaptic density. In terms of biological role, involved in maintenance of high-frequency synaptic transmission at hippocampal CA3-CA1 synapses. Regulates AMPA-type glutamate receptor (AMPAR) immobilization at postsynaptic density keeping the channels in an activated state in the presence of glutamate and preventing synaptic depression. May play a role in self-renewal and differentiation of spermatogonial stem cells by inhibiting canonical Wnt signaling pathway. This is Protein shisa-6 from Homo sapiens (Human).